The following is an 87-amino-acid chain: Mitochondrial import inner membrane translocase subunit TIM9 (87 aa).

Met-1 is subject to N-acetylmethionine. A Twin CX3C motif motif is present at residues 35–59; the sequence is CFTDCVNDFTTSKLTNKEQTCIMKC. Cystine bridges form between Cys-35–Cys-59 and Cys-39–Cys-55.

Belongs to the small Tim family. As to quaternary structure, heterohexamer; composed of 3 copies of TIM9 and 3 copies of TIM10, named soluble 70 kDa complex. Associates with the TIM12 component of the TIM22 complex, whose core is composed of TIM18, TIM22 and TIM54. Interacts with the transmembrane regions of multi-pass transmembrane proteins in transit.

The protein localises to the mitochondrion inner membrane. It localises to the mitochondrion intermembrane space. Mitochondrial intermembrane chaperone that participates in the import and insertion of multi-pass transmembrane proteins into the mitochondrial inner membrane. Also required for the transfer of beta-barrel precursors from the TOM complex to the sorting and assembly machinery (SAM complex) of the outer membrane. Acts as a chaperone-like protein that protects the hydrophobic precursors from aggregation and guide them through the mitochondrial intermembrane space. Compared to TIM10, it may have a strong structural role. In Saccharomyces cerevisiae (strain ATCC 204508 / S288c) (Baker's yeast), this protein is Mitochondrial import inner membrane translocase subunit TIM9 (TIM9).